The following is a 239-amino-acid chain: Uridylate kinase (239 aa).

Residue 12–15 (KLSG) participates in ATP binding. Positions 21-26 (GEQGFG) are involved in allosteric activation by GTP. Glycine 55 provides a ligand contact to UMP. Positions 56 and 60 each coordinate ATP. Residues aspartate 75 and 136–143 (TGNPYFST) each bind UMP. Residues threonine 163, tyrosine 169, and aspartate 172 each coordinate ATP.

It belongs to the UMP kinase family. Homohexamer.

The protein resides in the cytoplasm. The catalysed reaction is UMP + ATP = UDP + ADP. Its pathway is pyrimidine metabolism; CTP biosynthesis via de novo pathway; UDP from UMP (UMPK route): step 1/1. With respect to regulation, allosterically activated by GTP. Inhibited by UTP. Catalyzes the reversible phosphorylation of UMP to UDP. The sequence is that of Uridylate kinase from Koribacter versatilis (strain Ellin345).